Consider the following 155-residue polypeptide: Ribosomal RNA large subunit methyltransferase H (155 aa).

Residues leucine 73, glycine 104, and 123–128 each bind S-adenosyl-L-methionine; that span reads LSPLTL.

The protein belongs to the RNA methyltransferase RlmH family. As to quaternary structure, homodimer.

It localises to the cytoplasm. It carries out the reaction pseudouridine(1915) in 23S rRNA + S-adenosyl-L-methionine = N(3)-methylpseudouridine(1915) in 23S rRNA + S-adenosyl-L-homocysteine + H(+). Its function is as follows. Specifically methylates the pseudouridine at position 1915 (m3Psi1915) in 23S rRNA. This is Ribosomal RNA large subunit methyltransferase H from Pseudomonas putida (strain GB-1).